Reading from the N-terminus, the 264-residue chain is Iodotyrosine deiodinase (264 aa).

FMN is bound by residues 75–79 and 103–104; these read RRTVR and SG. Positions 105, 132, 136, and 157 each coordinate 3-iodo-L-tyrosine. FMN-binding positions include 212 to 214 and arginine 254; that span reads TST.

Belongs to the nitroreductase family. Requires FMN as cofactor.

It carries out the reaction 2 iodide + L-tyrosine + 2 NADP(+) = 3,5-diiodo-L-tyrosine + 2 NADPH + H(+). The catalysed reaction is iodide + L-tyrosine + NADP(+) = 3-iodo-L-tyrosine + NADPH. The enzyme catalyses 3-iodo-L-tyrosine + iodide + NADP(+) = 3,5-diiodo-L-tyrosine + NADPH + H(+). It catalyses the reaction L-tyrosine + chloride + NADP(+) = 3-chloro-L-tyrosine + NADPH. It carries out the reaction bromide + L-tyrosine + NADP(+) = 3-bromo-L-tyrosine + NADPH. Functionally, catalyzes the dehalogenation of halotyrosines such as 3,5-diiodo-L-tyrosine. Likely to also catalyze the dehalogenation of other halotyrosines such as 3-bromo-L-tyrosine, 3-chloro-L-tyrosine and 3-iodo-L-tyrosine. This Nematostella vectensis (Starlet sea anemone) protein is Iodotyrosine deiodinase.